We begin with the raw amino-acid sequence, 808 residues long: Protein tortoise (808 aa).

Residues 43 to 78 (KDRKELYSLNNDSIKKKLNQLKDETNQLLKERGEEL) adopt a coiled-coil conformation. The tract at residues 152 to 171 (LTSGGANKKKSPFLEDNNNK) is disordered. Positions 694-733 (EDLDFQIEELELMIKNKKILEREIKAHNEKISKIIKDSRD) form a coiled coil.

It localises to the mitochondrion. In terms of biological role, required for efficient chemotaxis. This chain is Protein tortoise (torA), found in Dictyostelium discoideum (Social amoeba).